A 430-amino-acid chain; its full sequence is MRYPLGEALLALYRWRGPLINAGVGGHGYTYLLGAEANRFVFANADAFSWSQTFESLVPVDGPTALIVSDGADHRRRRSVVAPGLRHHHVQRYVATMVSNIDTVIDGWQPGQRLDIYQELRSAVRRSTAESLFGQRLAVHSDFLGEQLQPLLDLTRRPPQVMRLQQRVNSPGWRRAMAARKRIDDLIDAQIADARTAPRPDDHMLTTLISGCSEEGTTLSDNEIRDSIVSLITAGYETTSGALAWAIYALLTVPGTWESAASEVARVLGGRVPAADDLSALTYLNGVVHETLRLYSPGVISARRVLRDLWFDGHRIRAGRLLIFSAYVTHRLPEIWPEPTEFRPLRWDPNAADYRKPAPHEFIPFSGGLHRCIGAVMATTEMTVILARLVARAMLQLPAQRTHRIRAANFAALRPWPGLTVEIRKSAPAQ.

Cys-372 contacts heme.

This sequence belongs to the cytochrome P450 family. Heme is required as a cofactor.

The protein is Putative cytochrome P450 139 (cyp139) of Mycobacterium bovis (strain ATCC BAA-935 / AF2122/97).